A 1014-amino-acid chain; its full sequence is 2-oxoglutarate dehydrogenase, mitochondrial (1014 aa).

Residues 1-30 constitute a mitochondrion transit peptide; that stretch reads MLRFVSSQTCRYSSRGLLKTSLLKNASTVK. Residues Arg-306, Asp-406, Asn-439, and Ile-441 each contribute to the thiamine diphosphate site. Residues Asp-406, Asn-439, and Ile-441 each coordinate Mg(2+).

It belongs to the alpha-ketoglutarate dehydrogenase family. Component of the 2-oxoglutarate dehydrogenase complex (OGDC), also called alpha-ketoglutarate dehydrogenase (KGDH) complex. The copmplex is composed of the catalytic subunits OGDH (2-oxoglutarate dehydrogenase KGD1; also called E1 subunit), DLST (dihydrolipoamide succinyltransferase KGD2; also called E2 subunit) and DLD (dihydrolipoamide dehydrogenase LPD1; also called E3 subunit), and the assembly factor KGD4. Requires thiamine diphosphate as cofactor. Mg(2+) serves as cofactor.

The protein localises to the mitochondrion. Its subcellular location is the mitochondrion matrix. It localises to the mitochondrion nucleoid. The catalysed reaction is N(6)-[(R)-lipoyl]-L-lysyl-[protein] + 2-oxoglutarate + H(+) = N(6)-[(R)-S(8)-succinyldihydrolipoyl]-L-lysyl-[protein] + CO2. With respect to regulation, catabolite repressed. Its function is as follows. The 2-oxoglutarate dehydrogenase complex catalyzes the overall conversion of 2-oxoglutarate to succinyl-CoA and CO(2). It contains multiple copies of three enzymatic components: 2-oxoglutarate dehydrogenase (E1), dihydrolipoamide succinyltransferase (E2) and lipoamide dehydrogenase (E3). The chain is 2-oxoglutarate dehydrogenase, mitochondrial (KGD1) from Saccharomyces cerevisiae (strain ATCC 204508 / S288c) (Baker's yeast).